A 638-amino-acid polypeptide reads, in one-letter code: Threonine--tRNA ligase (638 aa).

The TGS domain occupies 1–61 (MPIITLPDGS…NSDSKVVIIT (61 aa)). A catalytic region spans residues 242 to 533 (DHRKLGKKHS…LIEQYEAKFP (292 aa)). Residues Cys-333, His-384, and His-510 each coordinate Zn(2+).

This sequence belongs to the class-II aminoacyl-tRNA synthetase family. Homodimer. Zn(2+) is required as a cofactor.

The protein resides in the cytoplasm. It catalyses the reaction tRNA(Thr) + L-threonine + ATP = L-threonyl-tRNA(Thr) + AMP + diphosphate + H(+). Functionally, catalyzes the attachment of threonine to tRNA(Thr) in a two-step reaction: L-threonine is first activated by ATP to form Thr-AMP and then transferred to the acceptor end of tRNA(Thr). Also edits incorrectly charged L-seryl-tRNA(Thr). In Prochlorococcus marinus (strain MIT 9215), this protein is Threonine--tRNA ligase.